A 614-amino-acid polypeptide reads, in one-letter code: UvrABC system protein C (614 aa).

Residues 26–104 enclose the GIY-YIG domain; that stretch reads NLPGVYKMLG…IKEHRPPYNV (79 aa). The 36-residue stretch at 215 to 250 folds into the UVR domain; the sequence is SDIHTTLIEKMEHSAEALDFEKAAFYRDQLSMLREV.

Belongs to the UvrC family. In terms of assembly, interacts with UvrB in an incision complex.

It is found in the cytoplasm. Its function is as follows. The UvrABC repair system catalyzes the recognition and processing of DNA lesions. UvrC both incises the 5' and 3' sides of the lesion. The N-terminal half is responsible for the 3' incision and the C-terminal half is responsible for the 5' incision. The chain is UvrABC system protein C from Psychrobacter sp. (strain PRwf-1).